Reading from the N-terminus, the 413-residue chain is Glucose-1-phosphate adenylyltransferase (413 aa).

Alpha-D-glucose 1-phosphate contacts are provided by residues Tyr102, Gly167, 182-183 (EK), and Ser200.

It belongs to the bacterial/plant glucose-1-phosphate adenylyltransferase family. In terms of assembly, homotetramer.

The enzyme catalyses alpha-D-glucose 1-phosphate + ATP + H(+) = ADP-alpha-D-glucose + diphosphate. Its pathway is glycan biosynthesis; glycogen biosynthesis. Involved in the biosynthesis of ADP-glucose, a building block required for the elongation reactions to produce glycogen. Catalyzes the reaction between ATP and alpha-D-glucose 1-phosphate (G1P) to produce pyrophosphate and ADP-Glc. The polypeptide is Glucose-1-phosphate adenylyltransferase (Deinococcus deserti (strain DSM 17065 / CIP 109153 / LMG 22923 / VCD115)).